The following is a 23-amino-acid chain: Phospholipase A2 crotoxin basic chain 3 (23 aa).

Ca(2+) is required as a cofactor. In terms of processing, contains 7 disulfide bonds. Expressed by the venom gland.

It localises to the secreted. The catalysed reaction is a 1,2-diacyl-sn-glycero-3-phosphocholine + H2O = a 1-acyl-sn-glycero-3-phosphocholine + a fatty acid + H(+). Snake venom phospholipase A2 (PLA2) that shows presynaptic neurotoxicity. PLA2 catalyzes the calcium-dependent hydrolysis of the 2-acyl groups in 3-sn-phosphoglycerides. This chain is Phospholipase A2 crotoxin basic chain 3, found in Crotalus durissus terrificus (South American rattlesnake).